Consider the following 101-residue polypeptide: MAAFQHRAKRSKNGASAKQGKISKADKKRAKLQVEKLDKRGVLLAELTAAAPAAKTGVLQAASLAQDQRSDAQAQQQRAQERSNVDKKVVQQLEAIAGFSL.

Residues 1-12 (MAAFQHRAKRSK) are compositionally biased toward basic residues. Disordered regions lie at residues 1 to 30 (MAAF…KKRA) and 65 to 87 (AQDQ…NVDK). Residues 65-78 (AQDQRSDAQAQQQR) are compositionally biased toward low complexity.

This is an uncharacterized protein from Eremothecium gossypii (strain ATCC 10895 / CBS 109.51 / FGSC 9923 / NRRL Y-1056) (Yeast).